The chain runs to 396 residues: DNA excision repair protein ERCC-8 (396 aa).

7 WD repeats span residues Asn33–Leu73, Cys88–Thr129, Gln133–Leu173, Ser177–Val216, Gln235–Ser274, Leu281–Val321, and Glu325–Pro363. Residues Asp371 to Gly396 form a disordered region. A phosphoserine mark is found at Ser390, Ser391, and Ser392.

In terms of assembly, part of the CSA complex (also named DCX(ERCC8) complex), a DCX E3 ubiquitin-protein ligase complex containing ERCC8, RBX1, DDB1 and CUL4A; the CSA complex interacts with RNA polymerase II; upon UV irradiation it interacts with the COP9 signalosome and preferentially with the hyperphosphorylated form of RNA polymerase II. Interacts with ERCC6/CSB (via CIM motif); promoting recruitment to lesion-stalled RNA polymerase II (Pol II). Interacts with KIAA1530/UVSSA. Interacts with a subunit of RNA polymerase II TFIIH.

It is found in the nucleus. The protein resides in the chromosome. Its subcellular location is the nucleus matrix. The protein operates within protein modification; protein ubiquitination. Substrate-recognition component of the CSA complex, a DCX (DDB1-CUL4-X-box) E3 ubiquitin-protein ligase complex, involved in transcription-coupled nucleotide excision repair (TC-NER), a process during which RNA polymerase II-blocking lesions are rapidly removed from the transcribed strand of active genes. Following recruitment to lesion-stalled RNA polymerase II (Pol II), the CSA complex mediates ubiquitination of Pol II subunit POLR2A/RPB1 at 'Lys-1268', a critical TC-NER checkpoint, governing RNA Pol II stability and initiating DNA damage excision by TFIIH recruitment. The CSA complex also promotes the ubiquitination and subsequent proteasomal degradation of ERCC6/CSB in a UV-dependent manner; ERCC6 degradation is essential for the recovery of RNA synthesis after transcription-coupled repair. Also plays a role in DNA double-strand breaks (DSSBs) repair by non-homologous end joining (NHEJ). The protein is DNA excision repair protein ERCC-8 of Homo sapiens (Human).